A 90-amino-acid polypeptide reads, in one-letter code: DNA-directed RNA polymerase subunit omega (90 aa).

This sequence belongs to the RNA polymerase subunit omega family. The RNAP catalytic core consists of 2 alpha, 1 beta, 1 beta' and 1 omega subunit. When a sigma factor is associated with the core the holoenzyme is formed, which can initiate transcription.

It carries out the reaction RNA(n) + a ribonucleoside 5'-triphosphate = RNA(n+1) + diphosphate. Functionally, promotes RNA polymerase assembly. Latches the N- and C-terminal regions of the beta' subunit thereby facilitating its interaction with the beta and alpha subunits. Required for kasugamycin production and aerial mycelium formation in S.kasugaensis and responsible for pleiotropy. The chain is DNA-directed RNA polymerase subunit omega (rpoZ) from Streptomyces kasugaensis.